Consider the following 189-residue polypeptide: Putative manganese efflux pump MntP (189 aa).

Transmembrane regions (helical) follow at residues 3-23 (PISL…AALG), 41-61 (LIFG…GQVA), 69-89 (DHWI…YNGI), 105-125 (FWIL…VGVG), 133-153 (IVIA…IGVM), and 168-188 (IVGG…HLSA).

This sequence belongs to the MntP (TC 9.B.29) family.

The protein localises to the cell inner membrane. In terms of biological role, probably functions as a manganese efflux pump. The polypeptide is Putative manganese efflux pump MntP (Pseudomonas savastanoi pv. phaseolicola (strain 1448A / Race 6) (Pseudomonas syringae pv. phaseolicola (strain 1448A / Race 6))).